The chain runs to 1159 residues: PAN2-PAN3 deadenylation complex catalytic subunit pan2 (1159 aa).

A WD repeat occupies 276 to 315 (ANVSFMLGIDISPSGEALAINDAECMVHLWGSPAKIHFNE). Residues 316-451 (MSKEVELADV…GAKLNGEAED (136 aa)) are linker. A USP domain is found at 452–821 (DPLLKYSNVE…VPCVLAFQVK (370 aa)). The 177-residue stretch at 872–1048 (LDTEFVDLEK…IEDARMALRL (177 aa)) folds into the Exonuclease domain. A divalent metal cation is bound by residues D873, E875, D982, and D1041. A disordered region spans residues 1094–1159 (TAVTMQNTNS…GDFFGGSPLK (66 aa)). Polar residues predominate over residues 1096–1106 (VTMQNTNSGRN). The segment covering 1107-1128 (TPTVPDAAGAPAVPASAPTTPG) has biased composition (low complexity). Residues 1143 to 1153 (TFSGPGAGDFF) are compositionally biased toward gly residues.

This sequence belongs to the peptidase C19 family. PAN2 subfamily. Forms a heterotrimer with an asymmetric homodimer of the regulatory subunit pan3 to form the poly(A)-nuclease (PAN) deadenylation complex. It depends on a divalent metal cation as a cofactor.

It localises to the cytoplasm. The catalysed reaction is Exonucleolytic cleavage of poly(A) to 5'-AMP.. Its activity is regulated as follows. Positively regulated by the regulatory subunit pan3. In terms of biological role, catalytic subunit of the poly(A)-nuclease (PAN) deadenylation complex, one of two cytoplasmic mRNA deadenylases involved in mRNA turnover. PAN specifically shortens poly(A) tails of RNA and the activity is stimulated by poly(A)-binding protein pab1. PAN deadenylation is followed by rapid degradation of the shortened mRNA tails by the CCR4-NOT complex. Deadenylated mRNAs are then degraded by two alternative mechanisms, namely exosome-mediated 3'-5' exonucleolytic degradation, or deadenylation-dependent mRNA decaping and subsequent 5'-3' exonucleolytic degradation by xrn1. May also be involved in post-transcriptional maturation of mRNA poly(A) tails. The protein is PAN2-PAN3 deadenylation complex catalytic subunit pan2 of Aspergillus terreus (strain NIH 2624 / FGSC A1156).